The chain runs to 156 residues: C-type lectin lectoxin-Phi1 (156 aa).

An N-terminal signal peptide occupies residues 1–23 (MGRFIFVSLGLLVLAFSLSGIGA). Intrachain disulfides connect Cys-27-Cys-38, Cys-55-Cys-154, and Cys-129-Cys-146. Residues 34–155 (HNVSCYKLIN…CNRRHRFLCK (122 aa)) enclose the C-type lectin domain. Residues Asn-35 and Asn-109 are each glycosylated (N-linked (GlcNAc...) asparagine). Positions 119 to 121 (EPN) match the Mannose-binding motif. Positions 127, 142, and 143 each coordinate Ca(2+).

It belongs to the true venom lectin family. Expressed by the venom gland.

The protein resides in the secreted. In terms of biological role, mannose-binding lectin which recognizes specific carbohydrate structures and agglutinates a variety of animal cells by binding to cell-surface glycoproteins and glycolipids. May be a calcium-dependent lectin. The polypeptide is C-type lectin lectoxin-Phi1 (Philodryas olfersii (Green snake)).